The chain runs to 96 residues: Phosphoribosyl-ATP pyrophosphatase (96 aa).

The protein belongs to the PRA-PH family.

Its subcellular location is the cytoplasm. It catalyses the reaction 1-(5-phospho-beta-D-ribosyl)-ATP + H2O = 1-(5-phospho-beta-D-ribosyl)-5'-AMP + diphosphate + H(+). Its pathway is amino-acid biosynthesis; L-histidine biosynthesis; L-histidine from 5-phospho-alpha-D-ribose 1-diphosphate: step 2/9. This chain is Phosphoribosyl-ATP pyrophosphatase, found in Methanococcus vannielii (strain ATCC 35089 / DSM 1224 / JCM 13029 / OCM 148 / SB).